Consider the following 369-residue polypeptide: 3 beta-hydroxysteroid dehydrogenase type 7 (369 aa).

Tyr-159 (proton acceptor) is an active-site residue. Position 163 (Lys-163) interacts with NAD(+). Transmembrane regions (helical) follow at residues 289–309 (LLPYWLLVFLAALNALLQWLL) and 311–331 (PLVLYAPLLNPYTLAVANTTF).

This sequence belongs to the 3-beta-HSD family.

It localises to the endoplasmic reticulum membrane. The enzyme catalyses 7alpha-hydroxycholesterol + NAD(+) = 7alpha-hydroxycholest-4-en-3-one + NADH + H(+). The catalysed reaction is 7alpha,25-dihydroxycholesterol + NAD(+) = 7alpha,25-dihydroxy-4-cholesten-3-one + NADH + H(+). It catalyses the reaction (25R)-cholest-5-en-3beta,7alpha,26-triol + NAD(+) = (25R)-7alpha,26-dihydroxycholest-4-en-3-one + NADH + H(+). It carries out the reaction (24S)-7alpha-dihydroxycholesterol + NAD(+) = (24S)-7alpha,24-dihydroxycholest-4-en-3-one + NADH + H(+). It functions in the pathway lipid metabolism; steroid biosynthesis. Functionally, the 3-beta-HSD enzymatic system plays a crucial role in the biosynthesis of all classes of hormonal steroids. HSD VII is active against four 7-alpha-hydroxylated sterols. Does not metabolize several different C(19/21) steroids as substrates. Involved in bile acid synthesis. Plays a key role in cell positioning and movement in lymphoid tissues by mediating degradation of 7-alpha,25-dihydroxycholesterol (7-alpha,25-OHC): 7-alpha,25-OHC acts as a ligand for the G protein-coupled receptor GPR183/EBI2, a chemotactic receptor for a number of lymphoid cells. This is 3 beta-hydroxysteroid dehydrogenase type 7 from Homo sapiens (Human).